Consider the following 397-residue polypeptide: ATP-dependent RNA helicase eIF4A (397 aa).

The short motif at 23–51 (YTFDDLNLKPNIVRGIFGYGYESPSAIQQ) is the Q motif element. A Helicase ATP-binding domain is found at 54 to 224 (ILPITEGRDV…TKFMNNPVRI (171 aa)). 67-74 (AQSGTGKT) is an ATP binding site. Residues 172–175 (DEAD) carry the DEAD box motif. In terms of domain architecture, Helicase C-terminal spans 235 to 396 (GIKQFYINVE…EMPADIGALF (162 aa)).

It belongs to the DEAD box helicase family. eIF4A subfamily. As to quaternary structure, component of the eIF4F complex, which composition varies with external and internal environmental conditions. It is composed of at least eIF4A, eIF4E and eIF4G.

The protein localises to the cytoplasm. It carries out the reaction ATP + H2O = ADP + phosphate + H(+). In terms of biological role, ATP-dependent RNA helicase which is a subunit of the eIF4F complex involved in cap recognition and is required for mRNA binding to ribosome. In the current model of translation initiation, eIF4A unwinds RNA secondary structures in the 5'-UTR of mRNAs which is necessary to allow efficient binding of the small ribosomal subunit, and subsequent scanning for the initiator codon. The protein is ATP-dependent RNA helicase eIF4A (TIF1) of Debaryomyces hansenii (strain ATCC 36239 / CBS 767 / BCRC 21394 / JCM 1990 / NBRC 0083 / IGC 2968) (Yeast).